The following is a 436-amino-acid chain: GTPase Der (436 aa).

EngA-type G domains follow at residues 4–167 (PTVA…PVEE) and 175–351 (IRFS…ESQN). GTP contacts are provided by residues 10–17 (GRPNVGKS), 57–61 (DTGGI), 119–122 (NKVD), 181–188 (GRPNVGKS), 229–233 (DTAGM), and 294–297 (NKWD). One can recognise a KH-like domain in the interval 352 to 436 (KRIPSAVLND…PIHLIARKRK (85 aa)).

This sequence belongs to the TRAFAC class TrmE-Era-EngA-EngB-Septin-like GTPase superfamily. EngA (Der) GTPase family. In terms of assembly, associates with the 50S ribosomal subunit.

In terms of biological role, GTPase that plays an essential role in the late steps of ribosome biogenesis. The polypeptide is GTPase Der (Streptococcus pyogenes serotype M2 (strain MGAS10270)).